The primary structure comprises 339 residues: Replication factor C subunit 5 (339 aa).

59-66 (GPPGTGKT) provides a ligand contact to ATP.

Belongs to the activator 1 small subunits family. As to quaternary structure, subunit of the RFC complex, an heteropentameric complex consisting of a large subunit RFC1 and four small subunits RFC2, RFC3, RFC4 and RFC5; the RFC complex interacts with PCNA. Forms an heterotetrameric complex with RFC2, RFC3 and RFC4; this complex has ATPase activity but is not stimulated by PCNA. The heterotetramer of subunits RFC2, RFC3, RFC4 and RFC5 interacts with RAD17.

The protein localises to the nucleus. Its function is as follows. Subunit of the replication factor C (RFC) complex which acts during elongation of primed DNA templates by DNA polymerases delta and epsilon, and is necessary for ATP-dependent loading of proliferating cell nuclear antigen (PCNA) onto primed DNA. This is Replication factor C subunit 5 (Rfc5) from Mus musculus (Mouse).